The chain runs to 377 residues: MIEVVDGQRKLSECKRIVVKIGSSLLTANGQGLDLDAISHWAKQIADLHNAGHEIILVSSGAVAEGMVRMKLASRPTDLPSLQACAAIGQMGLIHTWSSVLENHSIRAAQVLLTHDDLADRRRYLNSCDALQNLIDWRVIPVINENDTVSTDEIRFGDNDTLAAMVAGQVHADLLIILTDQQGMFDSDPRHNPDAKLLSTVRATDDVLFEMAGGGGVLGRGGMVTKVRAARLAAKSGCPTLIASGESDNVLSRVMAGEMLGTLFTTDKDRMTAHQQWLAAHLQTAGRLVIDDGAVEAIKLKHRSLLPVGVKTVEGHFDRGDVVECVDKQGKRVAVGRVNFSSRSAEIIKGLSSDKVYQVLGEARSLEMIHRDHMAIY.

Position 20 (Lys-20) interacts with ATP. Substrate-binding residues include Ser-60, Asp-147, and Asn-159. 179–180 (TD) provides a ligand contact to ATP. One can recognise a PUA domain in the interval 285–363 (AGRLVIDDGA…DKVYQVLGEA (79 aa)).

It belongs to the glutamate 5-kinase family.

The protein resides in the cytoplasm. The enzyme catalyses L-glutamate + ATP = L-glutamyl 5-phosphate + ADP. The protein operates within amino-acid biosynthesis; L-proline biosynthesis; L-glutamate 5-semialdehyde from L-glutamate: step 1/2. In terms of biological role, catalyzes the transfer of a phosphate group to glutamate to form L-glutamate 5-phosphate. In Acinetobacter baumannii (strain SDF), this protein is Glutamate 5-kinase.